We begin with the raw amino-acid sequence, 110 residues long: Phosphoribosyl-AMP cyclohydrolase (110 aa).

Asp-80 provides a ligand contact to Mg(2+). A Zn(2+)-binding site is contributed by Cys-81. Mg(2+) contacts are provided by Asp-82 and Asp-84. Cys-97 and Cys-104 together coordinate Zn(2+).

This sequence belongs to the PRA-CH family. Homodimer. It depends on Mg(2+) as a cofactor. Zn(2+) serves as cofactor.

The protein localises to the cytoplasm. The enzyme catalyses 1-(5-phospho-beta-D-ribosyl)-5'-AMP + H2O = 1-(5-phospho-beta-D-ribosyl)-5-[(5-phospho-beta-D-ribosylamino)methylideneamino]imidazole-4-carboxamide. The protein operates within amino-acid biosynthesis; L-histidine biosynthesis; L-histidine from 5-phospho-alpha-D-ribose 1-diphosphate: step 3/9. Catalyzes the hydrolysis of the adenine ring of phosphoribosyl-AMP. This Clostridium botulinum (strain 657 / Type Ba4) protein is Phosphoribosyl-AMP cyclohydrolase.